Consider the following 215-residue polypeptide: Large ribosomal subunit protein uL4 (215 aa).

The segment at 46–76 is disordered; sequence TAKSKNRAEVSGGGRKPWAQKGGGRARAGSI. The segment covering 56–71 has biased composition (gly residues); the sequence is SGGGRKPWAQKGGGRA.

It belongs to the universal ribosomal protein uL4 family. As to quaternary structure, part of the 50S ribosomal subunit.

Its function is as follows. One of the primary rRNA binding proteins, this protein initially binds near the 5'-end of the 23S rRNA. It is important during the early stages of 50S assembly. It makes multiple contacts with different domains of the 23S rRNA in the assembled 50S subunit and ribosome. In terms of biological role, forms part of the polypeptide exit tunnel. This chain is Large ribosomal subunit protein uL4, found in Helicobacter pylori (strain HPAG1).